The following is a 166-amino-acid chain: Cofilin-2 (166 aa).

The residue at position 2 (Ala-2) is an N-acetylalanine. Residue Ser-3 is modified to Phosphoserine. Residues 4 to 153 (GVTVNDEVIK…KDRSTLGEKL (150 aa)) enclose the ADF-H domain. The residue at position 6 (Thr-6) is a Phosphothreonine. Positions 30 to 34 (KKRKK) match the Nuclear localization signal motif.

It belongs to the actin-binding proteins ADF family. In terms of assembly, interacts with CSRP3; possibly two molecules of CFL2 can interact with one molecule if CSRP3. The phosphorylation of Ser-24 may prevent recognition of the nuclear localization signal. Predominantly expressed in skeletal muscle.

The protein localises to the nucleus matrix. It localises to the cytoplasm. It is found in the cytoskeleton. In terms of biological role, controls reversibly actin polymerization and depolymerization in a pH-sensitive manner. It has the ability to bind G- and F-actin in a 1:1 ratio of cofilin to actin. It is the major component of intranuclear and cytoplasmic actin rods. Required for muscle maintenance. May play a role during the exchange of alpha-actin forms during the early postnatal remodeling of the sarcomere. This chain is Cofilin-2 (Cfl2), found in Mus musculus (Mouse).